The primary structure comprises 145 residues: D-aminoacyl-tRNA deacylase (145 aa).

Residues 137 to 138 (GP) carry the Gly-cisPro motif, important for rejection of L-amino acids motif.

The protein belongs to the DTD family. Homodimer.

It localises to the cytoplasm. It carries out the reaction glycyl-tRNA(Ala) + H2O = tRNA(Ala) + glycine + H(+). The catalysed reaction is a D-aminoacyl-tRNA + H2O = a tRNA + a D-alpha-amino acid + H(+). Its function is as follows. An aminoacyl-tRNA editing enzyme that deacylates mischarged D-aminoacyl-tRNAs. Also deacylates mischarged glycyl-tRNA(Ala), protecting cells against glycine mischarging by AlaRS. Acts via tRNA-based rather than protein-based catalysis; rejects L-amino acids rather than detecting D-amino acids in the active site. By recycling D-aminoacyl-tRNA to D-amino acids and free tRNA molecules, this enzyme counteracts the toxicity associated with the formation of D-aminoacyl-tRNA entities in vivo and helps enforce protein L-homochirality. This is D-aminoacyl-tRNA deacylase from Exiguobacterium sibiricum (strain DSM 17290 / CCUG 55495 / CIP 109462 / JCM 13490 / 255-15).